A 356-amino-acid polypeptide reads, in one-letter code: Dual-specificity RNA methyltransferase RlmN (356 aa).

Glutamate 89 serves as the catalytic Proton acceptor. Positions 108 to 341 constitute a Radical SAM core domain; that stretch reads SHARYTICVS…CTIRESKGLD (234 aa). The cysteines at positions 115 and 346 are disulfide-linked. Residues cysteine 122, cysteine 126, and cysteine 129 each contribute to the [4Fe-4S] cluster site. S-adenosyl-L-methionine contacts are provided by residues 172–173, serine 204, 227–229, and asparagine 303; these read GE and SLH. The active-site S-methylcysteine intermediate is the cysteine 346.

This sequence belongs to the radical SAM superfamily. RlmN family. It depends on [4Fe-4S] cluster as a cofactor.

Its subcellular location is the cytoplasm. The catalysed reaction is adenosine(2503) in 23S rRNA + 2 reduced [2Fe-2S]-[ferredoxin] + 2 S-adenosyl-L-methionine = 2-methyladenosine(2503) in 23S rRNA + 5'-deoxyadenosine + L-methionine + 2 oxidized [2Fe-2S]-[ferredoxin] + S-adenosyl-L-homocysteine. The enzyme catalyses adenosine(37) in tRNA + 2 reduced [2Fe-2S]-[ferredoxin] + 2 S-adenosyl-L-methionine = 2-methyladenosine(37) in tRNA + 5'-deoxyadenosine + L-methionine + 2 oxidized [2Fe-2S]-[ferredoxin] + S-adenosyl-L-homocysteine. Specifically methylates position 2 of adenine 2503 in 23S rRNA and position 2 of adenine 37 in tRNAs. m2A2503 modification seems to play a crucial role in the proofreading step occurring at the peptidyl transferase center and thus would serve to optimize ribosomal fidelity. The chain is Dual-specificity RNA methyltransferase RlmN from Campylobacter jejuni subsp. jejuni serotype O:23/36 (strain 81-176).